Consider the following 412-residue polypeptide: 43 kDa receptor-associated protein of the synapse (412 aa).

Gly2 carries N-myristoyl glycine lipidation. 7 TPR repeats span residues 6 to 39, 83 to 116, 123 to 156, 163 to 196, 206 to 239, 246 to 279, and 286 to 319; these read TKQQ…STEL, TEAY…EGGP, GQVC…AHGN, CRVC…VADY, AMSR…ALQH, ALCL…MTEI, and AHVL…ADAV. Tyr196 carries the phosphotyrosine modification. An RING-type zinc finger spans residues 363–403; the sequence is CGLCGESIGDQNSQLQALPCSHLFHLKCLQTNGNRGCPNCK. Ser405 is subject to Phosphoserine.

The protein belongs to the RAPsyn family.

The protein resides in the cell membrane. It localises to the postsynaptic cell membrane. Its subcellular location is the cytoplasm. It is found in the cytoskeleton. Functionally, postsynaptic protein required for clustering of nicotinic acetylcholine receptors (nAChRs) at the neuromuscular junction. It may link the receptor to the underlying postsynaptic cytoskeleton, possibly by direct association with actin or spectrin. The polypeptide is 43 kDa receptor-associated protein of the synapse (RAPSN) (Tetronarce californica (Pacific electric ray)).